Here is a 177-residue protein sequence, read N- to C-terminus: ADP-ribosylation factor-like protein 3 (177 aa).

G2 is lipidated: N-myristoyl glycine. GTP contacts are provided by residues 23–31 (GLDNAGKTT), 125–128 (NKQD), and A159.

The protein belongs to the small GTPase superfamily. Arf family.

It is found in the golgi apparatus membrane. It localises to the cytoplasm. The protein resides in the cytoskeleton. The protein localises to the spindle. Its subcellular location is the nucleus. It is found in the microtubule organizing center. Small GTP-binding protein which cycles between an inactive GDP-bound and an active GTP-bound form, and the rate of cycling is regulated by guanine nucleotide exchange factors (GEF) and GTPase-activating proteins (GAP). Required for normal cytokinesis and cilia signaling. Required for targeting proteins to the ciliary membrane by releasing myristoylated protein from unc119 cargo adapters into the cilium. The polypeptide is ADP-ribosylation factor-like protein 3 (Chlamydomonas reinhardtii (Chlamydomonas smithii)).